The primary structure comprises 493 residues: Glutamyl-tRNA(Gln) amidotransferase subunit A (493 aa).

Catalysis depends on charge relay system residues K81 and S156. S180 (acyl-ester intermediate) is an active-site residue.

Belongs to the amidase family. GatA subfamily. Heterotrimer of A, B and C subunits.

The enzyme catalyses L-glutamyl-tRNA(Gln) + L-glutamine + ATP + H2O = L-glutaminyl-tRNA(Gln) + L-glutamate + ADP + phosphate + H(+). Allows the formation of correctly charged Gln-tRNA(Gln) through the transamidation of misacylated Glu-tRNA(Gln) in organisms which lack glutaminyl-tRNA synthetase. The reaction takes place in the presence of glutamine and ATP through an activated gamma-phospho-Glu-tRNA(Gln). This Mycolicibacterium paratuberculosis (strain ATCC BAA-968 / K-10) (Mycobacterium paratuberculosis) protein is Glutamyl-tRNA(Gln) amidotransferase subunit A.